The primary structure comprises 454 residues: tRNA modification GTPase MnmE (454 aa).

Residues R23, E80, and K120 each coordinate (6S)-5-formyl-5,6,7,8-tetrahydrofolate. The region spanning 216–377 (GMKVVIAGRP…LRNHLKQSMG (162 aa)) is the TrmE-type G domain. N226 lines the K(+) pocket. Residues 226 to 231 (NAGKSS), 245 to 251 (TDIAGTT), 270 to 273 (DTAG), 335 to 338 (NKAD), and 358 to 360 (SAR) contribute to the GTP site. Residue S230 coordinates Mg(2+). K(+) is bound by residues T245, I247, and T250. T251 is a Mg(2+) binding site. K454 contacts (6S)-5-formyl-5,6,7,8-tetrahydrofolate.

The protein belongs to the TRAFAC class TrmE-Era-EngA-EngB-Septin-like GTPase superfamily. TrmE GTPase family. In terms of assembly, homodimer. Heterotetramer of two MnmE and two MnmG subunits. K(+) serves as cofactor.

The protein resides in the cytoplasm. In terms of biological role, exhibits a very high intrinsic GTPase hydrolysis rate. Involved in the addition of a carboxymethylaminomethyl (cmnm) group at the wobble position (U34) of certain tRNAs, forming tRNA-cmnm(5)s(2)U34. The protein is tRNA modification GTPase MnmE of Escherichia coli O139:H28 (strain E24377A / ETEC).